The sequence spans 64 residues: Defensin-like protein 123 (64 aa).

4 cysteine pairs are disulfide-bonded: C19–C62, C29–C49, C34–C56, and C38–C58.

Belongs to the DEFL family.

The polypeptide is Defensin-like protein 123 (Arabidopsis thaliana (Mouse-ear cress)).